The sequence spans 116 residues: Iron-sulfur cluster insertion protein ErpA (116 aa).

3 residues coordinate iron-sulfur cluster: C44, C108, and C110.

This sequence belongs to the HesB/IscA family. In terms of assembly, homodimer. The cofactor is iron-sulfur cluster.

In terms of biological role, required for insertion of 4Fe-4S clusters for at least IspG. The sequence is that of Iron-sulfur cluster insertion protein ErpA from Shewanella piezotolerans (strain WP3 / JCM 13877).